The following is a 227-amino-acid chain: Cytochrome c oxidase subunit 2 (227 aa).

Over 1–14 (MAYPMQLGFQDATS) the chain is Mitochondrial intermembrane. A helical membrane pass occupies residues 15–45 (PIMEELLHFHDHTLMIVFLISSLVLYVISLM). Topologically, residues 46–59 (LTTKLTHTSTMDAQ) are mitochondrial matrix. Residues 60–87 (EVETIWTILPAIILILIALPSLRILYMM) traverse the membrane as a helical segment. The Mitochondrial intermembrane segment spans residues 88-227 (DEINNPSLTV…YFEKWSASML (140 aa)). Cu cation-binding residues include H161, C196, E198, C200, H204, and M207. E198 contacts Mg(2+).

The protein belongs to the cytochrome c oxidase subunit 2 family. In terms of assembly, component of the cytochrome c oxidase (complex IV, CIV), a multisubunit enzyme composed of 14 subunits. The complex is composed of a catalytic core of 3 subunits MT-CO1, MT-CO2 and MT-CO3, encoded in the mitochondrial DNA, and 11 supernumerary subunits COX4I, COX5A, COX5B, COX6A, COX6B, COX6C, COX7A, COX7B, COX7C, COX8 and NDUFA4, which are encoded in the nuclear genome. The complex exists as a monomer or a dimer and forms supercomplexes (SCs) in the inner mitochondrial membrane with NADH-ubiquinone oxidoreductase (complex I, CI) and ubiquinol-cytochrome c oxidoreductase (cytochrome b-c1 complex, complex III, CIII), resulting in different assemblies (supercomplex SCI(1)III(2)IV(1) and megacomplex MCI(2)III(2)IV(2)). Found in a complex with TMEM177, COA6, COX18, COX20, SCO1 and SCO2. Interacts with TMEM177 in a COX20-dependent manner. Interacts with COX20. Interacts with COX16. Cu cation serves as cofactor.

It is found in the mitochondrion inner membrane. It catalyses the reaction 4 Fe(II)-[cytochrome c] + O2 + 8 H(+)(in) = 4 Fe(III)-[cytochrome c] + 2 H2O + 4 H(+)(out). Functionally, component of the cytochrome c oxidase, the last enzyme in the mitochondrial electron transport chain which drives oxidative phosphorylation. The respiratory chain contains 3 multisubunit complexes succinate dehydrogenase (complex II, CII), ubiquinol-cytochrome c oxidoreductase (cytochrome b-c1 complex, complex III, CIII) and cytochrome c oxidase (complex IV, CIV), that cooperate to transfer electrons derived from NADH and succinate to molecular oxygen, creating an electrochemical gradient over the inner membrane that drives transmembrane transport and the ATP synthase. Cytochrome c oxidase is the component of the respiratory chain that catalyzes the reduction of oxygen to water. Electrons originating from reduced cytochrome c in the intermembrane space (IMS) are transferred via the dinuclear copper A center (CU(A)) of subunit 2 and heme A of subunit 1 to the active site in subunit 1, a binuclear center (BNC) formed by heme A3 and copper B (CU(B)). The BNC reduces molecular oxygen to 2 water molecules using 4 electrons from cytochrome c in the IMS and 4 protons from the mitochondrial matrix. In Gazella spekei (Speke's gazelle), this protein is Cytochrome c oxidase subunit 2 (MT-CO2).